The primary structure comprises 372 residues: Glutamate 5-kinase (372 aa).

Lysine 14 contacts ATP. The substrate site is built by serine 54, aspartate 141, and asparagine 153. 173–174 (TD) is a binding site for ATP. One can recognise a PUA domain in the interval 280-358 (RGTLVLDAGA…DAIESLLGYS (79 aa)).

It belongs to the glutamate 5-kinase family.

Its subcellular location is the cytoplasm. The catalysed reaction is L-glutamate + ATP = L-glutamyl 5-phosphate + ADP. It participates in amino-acid biosynthesis; L-proline biosynthesis; L-glutamate 5-semialdehyde from L-glutamate: step 1/2. In terms of biological role, catalyzes the transfer of a phosphate group to glutamate to form L-glutamate 5-phosphate. This Pseudomonas putida (strain W619) protein is Glutamate 5-kinase.